The chain runs to 392 residues: Protein FAM185A (392 aa).

Residues 39–60 (YSSGGSERWPGSETEVPPPGPG) are disordered.

This chain is Protein FAM185A (FAM185A), found in Homo sapiens (Human).